We begin with the raw amino-acid sequence, 384 residues long: DNA replication and repair protein RecF (384 aa).

An ATP-binding site is contributed by G43–T50.

Belongs to the RecF family.

Its subcellular location is the cytoplasm. The RecF protein is involved in DNA metabolism; it is required for DNA replication and normal SOS inducibility. RecF binds preferentially to single-stranded, linear DNA. It also seems to bind ATP. The sequence is that of DNA replication and repair protein RecF from Brucella abortus (strain 2308).